Reading from the N-terminus, the 95-residue chain is Aspartyl/glutamyl-tRNA(Asn/Gln) amidotransferase subunit C (95 aa).

The protein belongs to the GatC family. Heterotrimer of A, B and C subunits.

The enzyme catalyses L-glutamyl-tRNA(Gln) + L-glutamine + ATP + H2O = L-glutaminyl-tRNA(Gln) + L-glutamate + ADP + phosphate + H(+). The catalysed reaction is L-aspartyl-tRNA(Asn) + L-glutamine + ATP + H2O = L-asparaginyl-tRNA(Asn) + L-glutamate + ADP + phosphate + 2 H(+). Functionally, allows the formation of correctly charged Asn-tRNA(Asn) or Gln-tRNA(Gln) through the transamidation of misacylated Asp-tRNA(Asn) or Glu-tRNA(Gln) in organisms which lack either or both of asparaginyl-tRNA or glutaminyl-tRNA synthetases. The reaction takes place in the presence of glutamine and ATP through an activated phospho-Asp-tRNA(Asn) or phospho-Glu-tRNA(Gln). This is Aspartyl/glutamyl-tRNA(Asn/Gln) amidotransferase subunit C from Azoarcus sp. (strain BH72).